The chain runs to 84 residues: Hirudin-HM2 (84 aa).

Positions 1 to 20 are cleaved as a signal peptide; that stretch reads MFSLKLFVVFLAVCICVSQA. Residues 21–23 are interaction with thrombin active site; sequence VSY. Intrachain disulfides connect Cys-26–Cys-34, Cys-36–Cys-48, and Cys-42–Cys-57. Residues 53–84 are disordered; sequence SGNQCVHGEGTPKPKSQTEGDFEEIPDEDILN. O-linked (GalNAc...) threonine glycosylation occurs at Thr-63. Residues 72–84 are compositionally biased toward acidic residues; it reads GDFEEIPDEDILN. An interaction with fibrinogen-binding exosite of thrombin region spans residues 73–84; sequence DFEEIPDEDILN.

The protein belongs to the protease inhibitor I14 (hirudin) family.

It is found in the secreted. Functionally, hirudin is a potent thrombin-specific protease inhibitor. It forms a stable non-covalent complex with alpha-thrombin, thereby abolishing its ability to cleave fibrinogen. The sequence is that of Hirudin-HM2 from Hirudinaria manillensis (Asian medical leech).